The sequence spans 497 residues: MPMKFEFTFSKSHRPAGGSAVLLQVAGAKEPAGVAVVDPEGVLPKAAKIGKFSGKALSSLDIVAPHGSPADRIILLGLGDAAALTSHDWLKAGGAAAAKLRSADKATIFLDAPGVDVTGKAAADFALGMEMNAYAFDSYKTRKSDDESKSAQKVVKVTIVTGMVIAAKKAFATVQSIGEGVFLARDLVNEPANVLGPVEFAARAKELEKLGVEVETLTEREMKKLGMGALLGVAQGSSRPPRLVVMQWKGGKAKDKPLAFIGKGVVFDTGGISIKPASGMEEMKGDMGGAAAVTGLMHVLAARKASVNAVGIIGLVENMPDGSAQRPGDIVTSMSGQTIEVINTDAEGRLVLCDALWYCNDRFKPKAMIDLATLTGAIMVALSNHYAGLFSNDDRLAEQLLKAGTTTHERLWRMPLGKEYDKMIDSKFADMKNTGGRHGGSVTAAQFLKRFVKDTPWAHLDIAGTAMGSPTDEINQSWGSGFGVRLLDELVRANYES.

Mn(2+)-binding residues include Lys-263 and Asp-268. The active site involves Lys-275. Mn(2+) is bound by residues Asp-286, Asp-345, and Glu-347. The active site involves Arg-349.

It belongs to the peptidase M17 family. It depends on Mn(2+) as a cofactor.

It localises to the cytoplasm. The enzyme catalyses Release of an N-terminal amino acid, Xaa-|-Yaa-, in which Xaa is preferably Leu, but may be other amino acids including Pro although not Arg or Lys, and Yaa may be Pro. Amino acid amides and methyl esters are also readily hydrolyzed, but rates on arylamides are exceedingly low.. It carries out the reaction Release of an N-terminal amino acid, preferentially leucine, but not glutamic or aspartic acids.. Its function is as follows. Presumably involved in the processing and regular turnover of intracellular proteins. Catalyzes the removal of unsubstituted N-terminal amino acids from various peptides. The polypeptide is Probable cytosol aminopeptidase (Sinorhizobium fredii (strain NBRC 101917 / NGR234)).